Reading from the N-terminus, the 188-residue chain is 2-amino-4-hydroxy-6-hydroxymethyldihydropteridine pyrophosphokinase (188 aa).

It belongs to the HPPK family.

It catalyses the reaction 6-hydroxymethyl-7,8-dihydropterin + ATP = (7,8-dihydropterin-6-yl)methyl diphosphate + AMP + H(+). The protein operates within cofactor biosynthesis; tetrahydrofolate biosynthesis; 2-amino-4-hydroxy-6-hydroxymethyl-7,8-dihydropteridine diphosphate from 7,8-dihydroneopterin triphosphate: step 4/4. In terms of biological role, catalyzes the transfer of pyrophosphate from adenosine triphosphate (ATP) to 6-hydroxymethyl-7,8-dihydropterin, an enzymatic step in folate biosynthesis pathway. The polypeptide is 2-amino-4-hydroxy-6-hydroxymethyldihydropteridine pyrophosphokinase (folK) (Mycobacterium tuberculosis (strain ATCC 25618 / H37Rv)).